The primary structure comprises 122 residues: Large ribosomal subunit protein bL12 (122 aa).

It belongs to the bacterial ribosomal protein bL12 family. Homodimer. Part of the ribosomal stalk of the 50S ribosomal subunit. Forms a multimeric L10(L12)X complex, where L10 forms an elongated spine to which 2 to 4 L12 dimers bind in a sequential fashion. Binds GTP-bound translation factors.

Forms part of the ribosomal stalk which helps the ribosome interact with GTP-bound translation factors. Is thus essential for accurate translation. The sequence is that of Large ribosomal subunit protein bL12 from Actinobacillus succinogenes (strain ATCC 55618 / DSM 22257 / CCUG 43843 / 130Z).